Reading from the N-terminus, the 114-residue chain is Gamma-glutamylcyclotransferase family protein ytfP (114 aa).

It belongs to the gamma-glutamylcyclotransferase family.

It localises to the cytoplasm. Its function is as follows. May play a role in antibiotic biosynthesis. This is Gamma-glutamylcyclotransferase family protein ytfP (ytfP) from Citrobacter rodentium (strain ICC168) (Citrobacter freundii biotype 4280).